Here is a 411-residue protein sequence, read N- to C-terminus: Tyrosine--tRNA ligase (411 aa).

Tyr34 serves as a coordination point for L-tyrosine. The short motif at 39 to 48 is the 'HIGH' region element; that stretch reads CTATSLHIGS. The L-tyrosine site is built by Tyr171 and Gln175. A 'KMSKS' region motif is present at residues 231–235; the sequence is KMGKT. Lys234 contacts ATP. In terms of domain architecture, S4 RNA-binding spans 345-411; sequence ISAYELFHEA…GKKRHILVRV (67 aa).

Belongs to the class-I aminoacyl-tRNA synthetase family. TyrS type 1 subfamily. Homodimer.

It is found in the cytoplasm. The catalysed reaction is tRNA(Tyr) + L-tyrosine + ATP = L-tyrosyl-tRNA(Tyr) + AMP + diphosphate + H(+). Catalyzes the attachment of tyrosine to tRNA(Tyr) in a two-step reaction: tyrosine is first activated by ATP to form Tyr-AMP and then transferred to the acceptor end of tRNA(Tyr). The protein is Tyrosine--tRNA ligase of Rickettsia massiliae (strain Mtu5).